The chain runs to 330 residues: 4-hydroxythreonine-4-phosphate dehydrogenase (330 aa).

A substrate-binding site is contributed by T133. Positions 161, 206, and 261 each coordinate a divalent metal cation. K269, N278, and R287 together coordinate substrate.

Belongs to the PdxA family. In terms of assembly, homodimer. It depends on Zn(2+) as a cofactor. Requires Mg(2+) as cofactor. The cofactor is Co(2+).

The protein resides in the cytoplasm. The catalysed reaction is 4-(phosphooxy)-L-threonine + NAD(+) = 3-amino-2-oxopropyl phosphate + CO2 + NADH. It functions in the pathway cofactor biosynthesis; pyridoxine 5'-phosphate biosynthesis; pyridoxine 5'-phosphate from D-erythrose 4-phosphate: step 4/5. Functionally, catalyzes the NAD(P)-dependent oxidation of 4-(phosphooxy)-L-threonine (HTP) into 2-amino-3-oxo-4-(phosphooxy)butyric acid which spontaneously decarboxylates to form 3-amino-2-oxopropyl phosphate (AHAP). The polypeptide is 4-hydroxythreonine-4-phosphate dehydrogenase (Xylella fastidiosa (strain Temecula1 / ATCC 700964)).